The sequence spans 297 residues: 4-diphosphocytidyl-2-C-methyl-D-erythritol kinase (297 aa).

K6 is a catalytic residue. 94–104 (PVAGGMAGGSA) is an ATP binding site. The active site involves D136.

The protein belongs to the GHMP kinase family. IspE subfamily.

The enzyme catalyses 4-CDP-2-C-methyl-D-erythritol + ATP = 4-CDP-2-C-methyl-D-erythritol 2-phosphate + ADP + H(+). The protein operates within isoprenoid biosynthesis; isopentenyl diphosphate biosynthesis via DXP pathway; isopentenyl diphosphate from 1-deoxy-D-xylulose 5-phosphate: step 3/6. Catalyzes the phosphorylation of the position 2 hydroxy group of 4-diphosphocytidyl-2C-methyl-D-erythritol. This chain is 4-diphosphocytidyl-2-C-methyl-D-erythritol kinase, found in Nocardioides sp. (strain ATCC BAA-499 / JS614).